We begin with the raw amino-acid sequence, 542 residues long: Probable cysteine proteinase 361L (542 aa).

Active-site residues include C172, H382, and N414. A helical membrane pass occupies residues 520–540 (TNNWYIYALIIIFILIIFFVL).

Belongs to the peptidase C1 family.

It localises to the membrane. Its function is as follows. Probable cysteine protease. This chain is Probable cysteine proteinase 361L, found in Acheta domesticus (House cricket).